The sequence spans 94 residues: Putative septation protein SpoVG (94 aa).

The protein belongs to the SpoVG family.

In terms of biological role, could be involved in septation. The protein is Putative septation protein SpoVG of Acetivibrio thermocellus (strain ATCC 27405 / DSM 1237 / JCM 9322 / NBRC 103400 / NCIMB 10682 / NRRL B-4536 / VPI 7372) (Clostridium thermocellum).